Here is a 375-residue protein sequence, read N- to C-terminus: tRNA-specific 2-thiouridylase MnmA (375 aa).

ATP-binding positions include 20–27 (AMSGGVDS) and Leu-46. The active-site Nucleophile is the Cys-114. A disulfide bridge connects residues Cys-114 and Cys-211. Residue Gly-138 coordinates ATP. Positions 160–162 (RDQ) are interaction with tRNA. Cys-211 functions as the Cysteine persulfide intermediate in the catalytic mechanism.

The protein belongs to the MnmA/TRMU family.

It localises to the cytoplasm. The enzyme catalyses S-sulfanyl-L-cysteinyl-[protein] + uridine(34) in tRNA + AH2 + ATP = 2-thiouridine(34) in tRNA + L-cysteinyl-[protein] + A + AMP + diphosphate + H(+). Catalyzes the 2-thiolation of uridine at the wobble position (U34) of tRNA, leading to the formation of s(2)U34. This Ruegeria pomeroyi (strain ATCC 700808 / DSM 15171 / DSS-3) (Silicibacter pomeroyi) protein is tRNA-specific 2-thiouridylase MnmA.